The sequence spans 390 residues: Chorismate synthase 2 (390 aa).

NADP(+)-binding residues include arginine 39 and arginine 45. Residues 132 to 134, 253 to 254, glycine 298, 313 to 317, and arginine 339 contribute to the FMN site; these read RSS, NA, and KPIPT.

Belongs to the chorismate synthase family. In terms of assembly, homotetramer. Requires FMNH2 as cofactor.

It carries out the reaction 5-O-(1-carboxyvinyl)-3-phosphoshikimate = chorismate + phosphate. Its pathway is metabolic intermediate biosynthesis; chorismate biosynthesis; chorismate from D-erythrose 4-phosphate and phosphoenolpyruvate: step 7/7. Functionally, catalyzes the anti-1,4-elimination of the C-3 phosphate and the C-6 proR hydrogen from 5-enolpyruvylshikimate-3-phosphate (EPSP) to yield chorismate, which is the branch point compound that serves as the starting substrate for the three terminal pathways of aromatic amino acid biosynthesis. This reaction introduces a second double bond into the aromatic ring system. The polypeptide is Chorismate synthase 2 (Bacillus thuringiensis (strain Al Hakam)).